Here is a 486-residue protein sequence, read N- to C-terminus: Glutamyl-tRNA(Gln) amidotransferase subunit A (486 aa).

Catalysis depends on charge relay system residues Lys75 and Ser150. The active-site Acyl-ester intermediate is the Ser174.

This sequence belongs to the amidase family. GatA subfamily. In terms of assembly, heterotrimer of A, B and C subunits.

It catalyses the reaction L-glutamyl-tRNA(Gln) + L-glutamine + ATP + H2O = L-glutaminyl-tRNA(Gln) + L-glutamate + ADP + phosphate + H(+). Functionally, allows the formation of correctly charged Gln-tRNA(Gln) through the transamidation of misacylated Glu-tRNA(Gln) in organisms which lack glutaminyl-tRNA synthetase. The reaction takes place in the presence of glutamine and ATP through an activated gamma-phospho-Glu-tRNA(Gln). This is Glutamyl-tRNA(Gln) amidotransferase subunit A from Nostoc punctiforme (strain ATCC 29133 / PCC 73102).